The chain runs to 253 residues: Small ribosomal subunit protein uS3 (253 aa).

One can recognise a KH type-2 domain in the interval 39-109; it reads IRNYVLARLK…EVKIDVVEVI (71 aa). The tract at residues 220 to 253 is disordered; it reads DEMKKMKDRRNDGGAKGRDSRDNRSKRRSRSKRS. Positions 221–242 are enriched in basic and acidic residues; it reads EMKKMKDRRNDGGAKGRDSRDN. Residues 243–253 show a composition bias toward basic residues; the sequence is RSKRRSRSKRS.

This sequence belongs to the universal ribosomal protein uS3 family. As to quaternary structure, part of the 30S ribosomal subunit. Forms a tight complex with proteins S10 and S14.

Its function is as follows. Binds the lower part of the 30S subunit head. Binds mRNA in the 70S ribosome, positioning it for translation. This chain is Small ribosomal subunit protein uS3, found in Chlorobium chlorochromatii (strain CaD3).